The chain runs to 105 residues: MAKKMQRRRRQKRTRSQRGELPFSLVDRFLREEFHSSRLSSSALSFLTSVLEYLTSNILELAGEVAQTTGRKRIAPEDVRLVVQNNEQLRQLFKPGGTSVNEDDN.

It belongs to the histone H2A family. In terms of assembly, the nucleosome is a histone octamer containing two molecules each of H2A, H2B, H3 and H4 assembled in one H3-H4 heterotetramer and two H2A-H2B heterodimers. May be incorporated into a proportion of nucleosomes, replacing one or more H2A molecules. Interacts with H2BC1/TH2B; preferentially dimerizes with H2BC1/TH2B to form nucleosomes. Testis-specific.

It localises to the nucleus. The protein localises to the chromosome. Functionally, atypical histone H2A which can replace conventional H2A in some nucleosomes and may play a role during spermatogenesis. Nucleosomes wrap and compact DNA into chromatin, limiting DNA accessibility to the cellular machineries which require DNA as a template. Histones thereby play a central role in transcription regulation, DNA repair, DNA replication and chromosomal stability. DNA accessibility is regulated via a complex set of post-translational modifications of histones, also called histone code, and nucleosome remodeling. This is Histone H2A-like 1 from Mus musculus (Mouse).